The chain runs to 288 residues: Aquaporin NIP2-1 (288 aa).

Methionine 1 carries the N-acetylmethionine modification. Helical transmembrane passes span 50 to 70 (LLAELVGTYYLIFAGCAAIAV) and 77 to 97 (VVTLVGIAVVWGIVIMVLVYC). Residues 106-108 (NPA) carry the NPA 1 motif. A run of 3 helical transmembrane segments spans residues 126 to 146 (AYITVQVIGSTLASATLRLLF), 170 to 190 (LQAFVMEFIITGFLMLVVCAV), and 202 to 222 (GLIIGATVTLNVIFAGEVSGA). The NPA 2 signature appears at 225–227 (NPA). A helical transmembrane segment spans residues 234–254 (LVWGCYKGIWIYLLAPTLGAV). A Phosphoserine modification is found at serine 278.

Belongs to the MIP/aquaporin (TC 1.A.8) family. NIP (TC 1.A.8.12) subfamily. Specifically expressed in roots with high expression in root elongation zone and root stele.

The protein localises to the endoplasmic reticulum membrane. Functionally, low water transport activity in yeast cells. This is Aquaporin NIP2-1 (NIP2-1) from Arabidopsis thaliana (Mouse-ear cress).